The following is a 361-amino-acid chain: Peptide chain release factor 1 (361 aa).

At glutamine 235 the chain carries N5-methylglutamine. Positions 283 to 306 (RSQQATAEAMTRKLQVGSGDRSQR) are disordered.

The protein belongs to the prokaryotic/mitochondrial release factor family. Post-translationally, methylated by PrmC. Methylation increases the termination efficiency of RF1.

The protein resides in the cytoplasm. Peptide chain release factor 1 directs the termination of translation in response to the peptide chain termination codons UAG and UAA. The sequence is that of Peptide chain release factor 1 from Xylella fastidiosa (strain M23).